Reading from the N-terminus, the 713-residue chain is KNR4/SMI1 homolog (713 aa).

Disordered stretches follow at residues Pro-18–Asp-129, Ile-255–Ala-274, Arg-400–Ala-457, and Glu-500–Lys-713. Residues Ala-22–Ala-34 are compositionally biased toward low complexity. Positions Gly-35–Thr-65 are enriched in polar residues. Composition is skewed to low complexity over residues Asn-66 to Ala-81 and Ser-88 to Ser-103. A compositionally biased stretch (polar residues) spans Asn-260–Gly-270. Residues Arg-400–Gln-412 are compositionally biased toward basic and acidic residues. Low complexity predominate over residues Ala-413 to Gln-429. 2 stretches are compositionally biased toward basic and acidic residues: residues Glu-507 to Lys-605 and Ala-613 to Glu-662. Positions Glu-663–Asp-686 are enriched in acidic residues. Basic residues predominate over residues Ser-701–Lys-713.

This sequence belongs to the KNR4/SMI1 family.

In Yarrowia lipolytica (strain CLIB 122 / E 150) (Yeast), this protein is KNR4/SMI1 homolog.